Reading from the N-terminus, the 1912-residue chain is Chromodomain-helicase-DNA-binding protein 4 (1912 aa).

The disordered stretch occupies residues 1-157 (MASGLGSPSP…PKSSAQLLED (157 aa)). Positions 35–45 (NEEDPEEDLSE) are enriched in acidic residues. The residue at position 44 (Ser-44) is a Phosphoserine. A compositionally biased stretch (basic residues) spans 113 to 131 (GKKKKKKLGPKKEKKSKSK). Lys-133 participates in a covalent cross-link: Glycyl lysine isopeptide (Lys-Gly) (interchain with G-Cter in SUMO2). The segment covering 135-145 (EEEEEDDDDDS) has biased composition (acidic residues). Glycyl lysine isopeptide (Lys-Gly) (interchain with G-Cter in SUMO2) cross-links involve residues Lys-146, Lys-179, and Lys-297. The disordered stretch occupies residues 243–360 (ATEVAPPPPP…KKKKGEEEVT (118 aa)). Positions 295–298 (KIKL) match the KIKL motif. Ser-303 is subject to Phosphoserine. Lys-304 is covalently cross-linked (Glycyl lysine isopeptide (Lys-Gly) (interchain with G-Cter in SUMO2)). Phosphoserine occurs at positions 308, 309, 310, and 319. Residues 311–323 (EDDDLDVESDFDD) are compositionally biased toward acidic residues. Positions 340–353 (SRSRKKLRTTKKKK) are enriched in basic residues. Position 367 is a phosphothreonine (Thr-367). The PHD-type 1 zinc finger occupies 370 to 417 (QDYCEVCQQGGEIILCDTCPRAYHMVCLDPDMEKAPEGKWSCPHCEKE). Ser-428 is modified (phosphoserine). The PHD-type 2 zinc finger occupies 449 to 496 (MEFCRVCKDGGELLCCDTCPSSYHIHCLNPPLPEIPNGEWLCPRCTCP). The Chromo 1 domain maps to 494–594 (TCPALKGKVQ…SGDFGGDEEK (101 aa)). 2 disordered regions span residues 510–537 (WGQP…PLEG) and 578–603 (NDMD…NKDP). The segment covering 513–522 (PPSPTPVPRP) has biased composition (pro residues). At Ser-515 the chain carries Phosphoserine. Phosphothreonine occurs at positions 517 and 529. The residue at position 531 (Ser-531) is a Phosphoserine. Residues Lys-618 and Lys-696 each participate in a glycyl lysine isopeptide (Lys-Gly) (interchain with G-Cter in SUMO2) cross-link. Positions 622–697 (MMIHRILNHS…KLKKVKLRKL (76 aa)) constitute a Chromo 2 domain. Thr-703 carries the post-translational modification Phosphothreonine. Lys-711 is covalently cross-linked (Glycyl lysine isopeptide (Lys-Gly) (interchain with G-Cter in SUMO1); alternate). A Glycyl lysine isopeptide (Lys-Gly) (interchain with G-Cter in SUMO2); alternate cross-link involves residue Lys-711. The 185-residue stretch at 738 to 922 (RFSWAQGTDT…FHLLNFLTPE (185 aa)) folds into the Helicase ATP-binding domain. 751–758 (DEMGLGKT) lines the ATP pocket. The DEAH box motif lies at 873-876 (DEAH). One can recognise a Helicase C-terminal domain in the interval 1054 to 1203 (LLQKMLKNLK…LTHLVVRPGL (150 aa)). Ser-1209 is subject to Phosphoserine. Glycyl lysine isopeptide (Lys-Gly) (interchain with G-Cter in SUMO2) cross-links involve residues Lys-1212, Lys-1228, Lys-1239, and Lys-1304. A phosphoserine mark is found at Ser-1308, Ser-1349, and Ser-1370. Disordered regions lie at residues 1344–1401 (NYND…KPLP) and 1525–1562 (EENK…PAED). Glycyl lysine isopeptide (Lys-Gly) (interchain with G-Cter in SUMO2) cross-links involve residues Lys-1528 and Lys-1529. 3 positions are modified to phosphoserine: Ser-1531, Ser-1535, and Ser-1537. Residues 1535-1544 (SPSPKTPTPS) show a composition bias toward pro residues. A phosphothreonine mark is found at Thr-1542, Thr-1549, and Thr-1553. Lys-1565 is covalently cross-linked (Glycyl lysine isopeptide (Lys-Gly) (interchain with G-Cter in SUMO2)). Ser-1570 carries the post-translational modification Phosphoserine. Residues 1570–1584 (SLKEEESIEGEKEVK) are compositionally biased toward basic and acidic residues. 2 disordered regions span residues 1570–1589 (SLKE…TAPE) and 1594–1644 (CTQA…VEKV). Lys-1572 participates in a covalent cross-link: Glycyl lysine isopeptide (Lys-Gly) (interchain with G-Cter in SUMO2). Ser-1576 carries the phosphoserine modification. The required for interaction with PCNT stretch occupies residues 1577–1912 (IEGEKEVKST…PTPQQVAQQQ (336 aa)). Lys-1584 participates in a covalent cross-link: Glycyl lysine isopeptide (Lys-Gly) (interchain with G-Cter in SUMO2). The residue at position 1602 (Ser-1602) is a Phosphoserine. Residues 1603-1644 (EDEKVVVEPPEGEEKVEKAEVKERTEEPMETEPKGAADVEKV) are compositionally biased toward basic and acidic residues. Residues Lys-1606, Lys-1617, and Lys-1636 each participate in a glycyl lysine isopeptide (Lys-Gly) (interchain with G-Cter in SUMO2) cross-link. Lys-1643 is covalently cross-linked (Glycyl lysine isopeptide (Lys-Gly) (interchain with G-Cter in SUMO2); alternate). Lys-1643 is subject to N6-acetyllysine; alternate. Lys-1647 is covalently cross-linked (Glycyl lysine isopeptide (Lys-Gly) (interchain with G-Cter in SUMO2)). Thr-1653 carries the phosphothreonine modification. Residues Lys-1660 and Lys-1670 each participate in a glycyl lysine isopeptide (Lys-Gly) (interchain with G-Cter in SUMO2) cross-link. Thr-1679 carries the phosphothreonine modification. Glycyl lysine isopeptide (Lys-Gly) (interchain with G-Cter in SUMO2) cross-links involve residues Lys-1687 and Lys-1865.

This sequence belongs to the SNF2/RAD54 helicase family. Component of the nucleosome remodeling and deacetylase (NuRD) repressor complex, composed of core proteins MTA1, MTA2, MTA3, RBBP4, RBBP7, HDAC1, HDAC2, MBD2, MBD3, and peripherally associated proteins CDK2AP1, CDK2AP2, GATAD2A, GATAD2B, CHD3, CHD4 and CHD5. The exact stoichiometry of the NuRD complex is unknown, and some subunits such as MBD2 and MBD3, GATAD2A and GATAD2B, and CHD3, CHD4 and CHD5 define mutually exclusive NuRD complexes. Interacts with IKFZ1; the interaction is direct and when in part of the NuRD complex. Part of a complex containing ATR and HDAC2. Interacts with HDAC2; the interaction is direct. Interacts with the cohesin complex component RAD21; the interaction is direct. Interacts with the ISWI chromatin remodeling complex component SMARCA5; the interaction is direct. Interacts with ZGPAT; the interaction is direct. Interacts with ZMYND8; the interaction is direct, appears to occur with monomeric ZMYND8, and is increased following DNA damage. Interacts with BCL6. Interacts with BRD4. Interacts with CBX1. Interacts with CBX3. Interacts with CBX5. Interacts with GATAD2A. Interacts with HDAC1. Interacts with KLF1; the interaction depends on sumoylation of KLF1, and leads to its transcriptional repression. Interacts with MTA1. Interacts with PCNT. Interacts with RBBP7. Interacts with SETX. Interacts with TRIM27. Interacts with histone H3. Interacts with histone H4. Does not interact with PWWP2A. Does not interact with PWWP2B. Interacts (via KIKL motif) with BRD3 (via NET domain). It depends on Zn(2+) as a cofactor. In terms of tissue distribution, widely expressed.

It is found in the nucleus. It localises to the cytoplasm. The protein localises to the cytoskeleton. The protein resides in the microtubule organizing center. Its subcellular location is the centrosome. The catalysed reaction is ATP + H2O = ADP + phosphate + H(+). Its function is as follows. ATP-dependent chromatin-remodeling factor that binds and distorts nucleosomal DNA. Acts as a component of the histone deacetylase NuRD complex which participates in the remodeling of chromatin. Localizes to acetylated damaged chromatin in a ZMYND8-dependent manner, to promote transcriptional repression and double-strand break repair by homologous recombination. Involved in neurogenesis. This is Chromodomain-helicase-DNA-binding protein 4 (CHD4) from Homo sapiens (Human).